The primary structure comprises 248 residues: PF03932 family protein CutC (248 aa).

The protein belongs to the CutC family. Homodimer.

The protein resides in the cytoplasm. This is PF03932 family protein CutC from Salmonella typhimurium (strain LT2 / SGSC1412 / ATCC 700720).